We begin with the raw amino-acid sequence, 539 residues long: Inositol 1,4,5-triphosphate receptor associated 2 (539 aa).

3 disordered regions span residues 1–21 (MLCV…DVTR), 69–98 (YLTQ…LHMA), and 147–171 (AGEE…ISMP). Over 1–479 (MLCVKGPPEQ…LQASFRRANR (479 aa)) the chain is Cytoplasmic. The span at 74–92 (SSEQTSSSESTVTSSESGS) shows a compositional bias: low complexity. At threonine 78 the chain carries Phosphothreonine. Residues 298–326 (MIQHVENLKRMYAKEHAELEDLKQALLQN) are a coiled coil. Residues 334 to 353 (PDEDDCQIKKRSSSLNSKPS) are disordered. Phosphoserine occurs at positions 347, 354, and 408. The disordered stretch occupies residues 418 to 449 (ERSDVKARDAPEPQGEEAVERTRKPSLSERRS). Over residues 435 to 449 (AVERTRKPSLSERRS) the composition is skewed to basic and acidic residues. A helical; Anchor for type IV membrane protein membrane pass occupies residues 480–500 (ALWLTGLIIILIAALMSFLTG). Residues 501 to 539 (QLFQTAVEAAPTQEGDSWLSLEHILWPFTRLGHDGPPPV) lie on the Lumenal side of the membrane.

This sequence belongs to the IRAG2 family. As to quaternary structure, interacts (via coiled-coil domain) with ITPR3. Interacts with SUN1 and SUN2. Interacts with microtubules. Interacts with HCN4; regulates HCN4 channel activity. The removal of the C-terminal lumenal domain occurs by proteolytic processing. Spleen and thymus. Expressed at high levels in pre B-cells, mature B-cells and pre T-cells. Expressed at low levels in mature T-cells and plasma B-cells. Expressed in circumvallate (CV), foliate (FL) and fungiform (FF) taste papillae cells of the tongue epithelium.

It localises to the cytoplasm. The protein resides in the endoplasmic reticulum membrane. Its subcellular location is the nucleus envelope. It is found in the cytoskeleton. The protein localises to the microtubule organizing center. It localises to the centrosome. The protein resides in the spindle pole. Its subcellular location is the chromosome. Functionally, plays a role in the delivery of peptides to major histocompatibility complex (MHC) class I molecules; this occurs in a transporter associated with antigen processing (TAP)-independent manner. May play a role in taste signal transduction via ITPR3. May play a role during fertilization in pronucleus congression and fusion. Plays a role in maintaining nuclear shape, maybe as a component of the LINC complex and through interaction with microtubules. Plays a role in the regulation of cellular excitability by regulating the hyperpolarization-activated cyclic nucleotide-gated HCN4 channel activity. The sequence is that of Inositol 1,4,5-triphosphate receptor associated 2 (Irag2) from Mus musculus (Mouse).